Consider the following 283-residue polypeptide: 4-diphosphocytidyl-2-C-methyl-D-erythritol kinase (283 aa).

K10 is a catalytic residue. P95 to S105 is an ATP binding site. D137 is an active-site residue.

It belongs to the GHMP kinase family. IspE subfamily.

The catalysed reaction is 4-CDP-2-C-methyl-D-erythritol + ATP = 4-CDP-2-C-methyl-D-erythritol 2-phosphate + ADP + H(+). The protein operates within isoprenoid biosynthesis; isopentenyl diphosphate biosynthesis via DXP pathway; isopentenyl diphosphate from 1-deoxy-D-xylulose 5-phosphate: step 3/6. Catalyzes the phosphorylation of the position 2 hydroxy group of 4-diphosphocytidyl-2C-methyl-D-erythritol. The sequence is that of 4-diphosphocytidyl-2-C-methyl-D-erythritol kinase from Limosilactobacillus reuteri (strain DSM 20016) (Lactobacillus reuteri).